Consider the following 229-residue polypeptide: Large ribosomal subunit protein uL1 (229 aa).

It belongs to the universal ribosomal protein uL1 family. In terms of assembly, part of the 50S ribosomal subunit.

Functionally, binds directly to 23S rRNA. The L1 stalk is quite mobile in the ribosome, and is involved in E site tRNA release. Its function is as follows. Protein L1 is also a translational repressor protein, it controls the translation of the L11 operon by binding to its mRNA. This chain is Large ribosomal subunit protein uL1, found in Mannheimia succiniciproducens (strain KCTC 0769BP / MBEL55E).